Here is a 178-residue protein sequence, read N- to C-terminus: Putative adenylate kinase (178 aa).

G10, G12, K13, S14, and S15 together coordinate ATP. The segment at 29-50 (TVVELAEKHGCIIDEEDGEIVI) is NMP. The interval 94-104 (GRNWSEEKLLE) is LID. ATP is bound at residue R95.

This sequence belongs to the adenylate kinase family. AK6 subfamily. Interacts with uS11. Not a structural component of 40S pre-ribosomes, but transiently interacts with them by binding to uS11.

The enzyme catalyses AMP + ATP = 2 ADP. It catalyses the reaction ATP + H2O = ADP + phosphate + H(+). Broad-specificity nucleoside monophosphate (NMP) kinase that catalyzes the reversible transfer of the terminal phosphate group between nucleoside triphosphates and monophosphates. Also has ATPase activity. Involved in the late maturation steps of the 30S ribosomal particles, specifically 16S rRNA maturation. While NMP activity is not required for ribosome maturation, ATPase activity is. Associates transiently with small ribosomal subunit protein uS11. ATP hydrolysis breaks the interaction with uS11. May temporarily remove uS11 from the ribosome to enable a conformational change of the ribosomal RNA that is needed for the final maturation step of the small ribosomal subunit. This is Putative adenylate kinase from Archaeoglobus fulgidus (strain ATCC 49558 / DSM 4304 / JCM 9628 / NBRC 100126 / VC-16).